The following is a 142-amino-acid chain: Large ribosomal subunit protein uL11 (142 aa).

Belongs to the universal ribosomal protein uL11 family. Part of the ribosomal stalk of the 50S ribosomal subunit. Interacts with L10 and the large rRNA to form the base of the stalk. L10 forms an elongated spine to which L12 dimers bind in a sequential fashion forming a multimeric L10(L12)X complex. Post-translationally, one or more lysine residues are methylated.

Forms part of the ribosomal stalk which helps the ribosome interact with GTP-bound translation factors. The sequence is that of Large ribosomal subunit protein uL11 from Haemophilus ducreyi (strain 35000HP / ATCC 700724).